Here is a 400-residue protein sequence, read N- to C-terminus: Probable peptidoglycan glycosyltransferase FtsW (400 aa).

Helical transmembrane passes span 30–50, 65–84, 92–112, 123–143, 157–177, 179–199, 201–221, 247–267, 280–300, 321–341, and 356–376; these read LSVL…SIGI, QAAY…RIRL, GLLL…GVGV, LGLF…LYLA, FAGF…LLME, DFGA…LAGA, LWQF…LAIT, TQSL…GASV, FLFA…VVLL, LFGA…AFIN, and LPLM…VGLL.

Belongs to the SEDS family. FtsW subfamily.

It localises to the cell inner membrane. The catalysed reaction is [GlcNAc-(1-&gt;4)-Mur2Ac(oyl-L-Ala-gamma-D-Glu-L-Lys-D-Ala-D-Ala)](n)-di-trans,octa-cis-undecaprenyl diphosphate + beta-D-GlcNAc-(1-&gt;4)-Mur2Ac(oyl-L-Ala-gamma-D-Glu-L-Lys-D-Ala-D-Ala)-di-trans,octa-cis-undecaprenyl diphosphate = [GlcNAc-(1-&gt;4)-Mur2Ac(oyl-L-Ala-gamma-D-Glu-L-Lys-D-Ala-D-Ala)](n+1)-di-trans,octa-cis-undecaprenyl diphosphate + di-trans,octa-cis-undecaprenyl diphosphate + H(+). The protein operates within cell wall biogenesis; peptidoglycan biosynthesis. In terms of biological role, peptidoglycan polymerase that is essential for cell division. In Thioalkalivibrio sulfidiphilus (strain HL-EbGR7), this protein is Probable peptidoglycan glycosyltransferase FtsW.